We begin with the raw amino-acid sequence, 546 residues long: Zinc metalloproteinase nas-9 (546 aa).

Positions 1 to 14 are cleaved as a signal peptide; that stretch reads MIFLLFVVFPFVYA. The propeptide occupies 15 to 300; that stretch reads QLLPELLAGF…GGGGGGRVPR (286 aa). Residue Asn248 is glycosylated (N-linked (GlcNAc...) asparagine). A Peptidase M12A domain is found at 308-507; the sequence is SAVQKWDIWK…IRLLKKMYCR (200 aa). 5 disulfide bridges follow: Cys347–Cys506, Cys372–Cys392, Cys510–Cys546, Cys517–Cys539, and Cys526–Cys543. His401 is a Zn(2+) binding site. The active site involves Glu402. Residues His405 and His411 each contribute to the Zn(2+) site. The 37-residue stretch at 510–546 folds into the ShKT domain; the sequence is CDDQNVHCGTWALHGYCKMKEQMKWMNENCKASCDKC.

Zn(2+) is required as a cofactor. In terms of tissue distribution, expressed in hypodermis, uterus and spermatheca.

It is found in the secreted. In terms of biological role, metalloprotease. This chain is Zinc metalloproteinase nas-9 (nas-9), found in Caenorhabditis elegans.